The primary structure comprises 419 residues: L-rhamnose isomerase (419 aa).

Mn(2+) is bound by residues His262, Asp294, and Asp296.

It belongs to the rhamnose isomerase family. Homotetramer. Requires Mn(2+) as cofactor.

Its subcellular location is the cytoplasm. The catalysed reaction is L-rhamnopyranose = L-rhamnulose. It participates in carbohydrate degradation; L-rhamnose degradation; glycerone phosphate from L-rhamnose: step 1/3. Functionally, catalyzes the interconversion of L-rhamnose and L-rhamnulose. The chain is L-rhamnose isomerase from Enterobacter sp. (strain 638).